Consider the following 138-residue polypeptide: Putative nickel-responsive regulator (138 aa).

4 residues coordinate Ni(2+): His76, His87, His89, and Cys95.

It belongs to the transcriptional regulatory CopG/NikR family. The cofactor is Ni(2+).

Functionally, transcriptional regulator. In Pseudomonas putida (strain W619), this protein is Putative nickel-responsive regulator.